A 216-amino-acid chain; its full sequence is Cytochrome c biogenesis ATP-binding export protein CcmA (216 aa).

Residues 11–216 (LSANELTCIR…RKITLDYRFV (206 aa)) enclose the ABC transporter domain. 43-50 (GPNGAGKT) is a binding site for ATP.

This sequence belongs to the ABC transporter superfamily. CcmA exporter (TC 3.A.1.107) family. In terms of assembly, the complex is composed of two ATP-binding proteins (CcmA) and two transmembrane proteins (CcmB).

Its subcellular location is the cell inner membrane. The enzyme catalyses heme b(in) + ATP + H2O = heme b(out) + ADP + phosphate + H(+). Part of the ABC transporter complex CcmAB involved in the biogenesis of c-type cytochromes; once thought to export heme, this seems not to be the case, but its exact role is uncertain. Responsible for energy coupling to the transport system. The protein is Cytochrome c biogenesis ATP-binding export protein CcmA of Shewanella frigidimarina (strain NCIMB 400).